A 332-amino-acid polypeptide reads, in one-letter code: Glycerol-3-phosphate dehydrogenase [NAD(P)+] (332 aa).

3 residues coordinate NADPH: serine 15, tryptophan 16, and lysine 110. Sn-glycerol 3-phosphate contacts are provided by lysine 110, glycine 137, and serine 139. Alanine 141 provides a ligand contact to NADPH. The sn-glycerol 3-phosphate site is built by lysine 192, aspartate 245, serine 255, arginine 256, and asparagine 257. The active-site Proton acceptor is lysine 192. Arginine 256 provides a ligand contact to NADPH. An NADPH-binding site is contributed by glutamate 282.

It belongs to the NAD-dependent glycerol-3-phosphate dehydrogenase family.

It localises to the cytoplasm. It carries out the reaction sn-glycerol 3-phosphate + NAD(+) = dihydroxyacetone phosphate + NADH + H(+). The catalysed reaction is sn-glycerol 3-phosphate + NADP(+) = dihydroxyacetone phosphate + NADPH + H(+). It functions in the pathway membrane lipid metabolism; glycerophospholipid metabolism. Catalyzes the reduction of the glycolytic intermediate dihydroxyacetone phosphate (DHAP) to sn-glycerol 3-phosphate (G3P), the key precursor for phospholipid synthesis. This Coxiella burnetii (strain RSA 331 / Henzerling II) protein is Glycerol-3-phosphate dehydrogenase [NAD(P)+].